The sequence spans 139 residues: Nucleoside diphosphate kinase (139 aa).

ATP contacts are provided by Lys-11, Phe-59, Arg-87, Thr-93, Arg-104, and Asn-114. The active-site Pros-phosphohistidine intermediate is the His-117.

Belongs to the NDK family. As to quaternary structure, homotetramer. Mg(2+) serves as cofactor.

Its subcellular location is the cytoplasm. The enzyme catalyses a 2'-deoxyribonucleoside 5'-diphosphate + ATP = a 2'-deoxyribonucleoside 5'-triphosphate + ADP. The catalysed reaction is a ribonucleoside 5'-diphosphate + ATP = a ribonucleoside 5'-triphosphate + ADP. Functionally, major role in the synthesis of nucleoside triphosphates other than ATP. The ATP gamma phosphate is transferred to the NDP beta phosphate via a ping-pong mechanism, using a phosphorylated active-site intermediate. This is Nucleoside diphosphate kinase from Flavobacterium psychrophilum (strain ATCC 49511 / DSM 21280 / CIP 103535 / JIP02/86).